We begin with the raw amino-acid sequence, 244 residues long: Ribosomal RNA large subunit methyltransferase E (244 aa).

Residues Gly-81, Trp-83, Asp-109, Asp-125, and Asp-149 each contribute to the S-adenosyl-L-methionine site. The Proton acceptor role is filled by Lys-189.

It belongs to the class I-like SAM-binding methyltransferase superfamily. RNA methyltransferase RlmE family.

The protein localises to the cytoplasm. It carries out the reaction uridine(2552) in 23S rRNA + S-adenosyl-L-methionine = 2'-O-methyluridine(2552) in 23S rRNA + S-adenosyl-L-homocysteine + H(+). Specifically methylates the uridine in position 2552 of 23S rRNA at the 2'-O position of the ribose in the fully assembled 50S ribosomal subunit. This chain is Ribosomal RNA large subunit methyltransferase E, found in Cereibacter sphaeroides (strain ATCC 17029 / ATH 2.4.9) (Rhodobacter sphaeroides).